Reading from the N-terminus, the 269-residue chain is Bifunctional protein FolD (269 aa).

NADP(+) is bound by residues Gly149–Gly151 and Val215.

It belongs to the tetrahydrofolate dehydrogenase/cyclohydrolase family. As to quaternary structure, homodimer.

The enzyme catalyses (6R)-5,10-methylene-5,6,7,8-tetrahydrofolate + NADP(+) = (6R)-5,10-methenyltetrahydrofolate + NADPH. It catalyses the reaction (6R)-5,10-methenyltetrahydrofolate + H2O = (6R)-10-formyltetrahydrofolate + H(+). It functions in the pathway one-carbon metabolism; tetrahydrofolate interconversion. Its function is as follows. Catalyzes the oxidation of 5,10-methylenetetrahydrofolate to 5,10-methenyltetrahydrofolate and then the hydrolysis of 5,10-methenyltetrahydrofolate to 10-formyltetrahydrofolate. This is Bifunctional protein FolD from Mycoplasma pneumoniae (strain ATCC 29342 / M129 / Subtype 1) (Mycoplasmoides pneumoniae).